Consider the following 345-residue polypeptide: Biotin synthase (345 aa).

The region spanning 38–256 (RQVQVSTLLS…IAVARIMMPA (219 aa)) is the Radical SAM core domain. [4Fe-4S] cluster contacts are provided by Cys53, Cys57, and Cys60. [2Fe-2S] cluster is bound by residues Cys97, Cys128, Cys188, and Arg260.

Belongs to the radical SAM superfamily. Biotin synthase family. In terms of assembly, homodimer. Requires [4Fe-4S] cluster as cofactor. [2Fe-2S] cluster is required as a cofactor.

It catalyses the reaction (4R,5S)-dethiobiotin + (sulfur carrier)-SH + 2 reduced [2Fe-2S]-[ferredoxin] + 2 S-adenosyl-L-methionine = (sulfur carrier)-H + biotin + 2 5'-deoxyadenosine + 2 L-methionine + 2 oxidized [2Fe-2S]-[ferredoxin]. Its pathway is cofactor biosynthesis; biotin biosynthesis; biotin from 7,8-diaminononanoate: step 2/2. Functionally, catalyzes the conversion of dethiobiotin (DTB) to biotin by the insertion of a sulfur atom into dethiobiotin via a radical-based mechanism. The chain is Biotin synthase from Pectobacterium atrosepticum (strain SCRI 1043 / ATCC BAA-672) (Erwinia carotovora subsp. atroseptica).